The primary structure comprises 60 residues: Large ribosomal subunit protein uL30 (60 aa).

It belongs to the universal ribosomal protein uL30 family. In terms of assembly, part of the 50S ribosomal subunit.

The chain is Large ribosomal subunit protein uL30 from Paracidovorax citrulli (strain AAC00-1) (Acidovorax citrulli).